The sequence spans 394 residues: Gap junction gamma-1 protein (394 aa).

The Cytoplasmic segment spans residues 1 to 22 (MSWSFLTRLLEEIHNHSTFVGK). A helical membrane pass occupies residues 23–45 (IWLSVLIVFRIVLTAVGGESIYY). Residues 46–75 (DEQSKFVCNTEQPGCENVCYDAFAPLSHVR) lie on the Extracellular side of the membrane. The chain crosses the membrane as a helical span at residues 76–95 (FWVFQIILVATPSVMYLGYA). Topologically, residues 96–176 (IHKIARMVEH…RRIREDGLMR (81 aa)) are cytoplasmic. Residues 177–199 (IYVLQLLVRATFEVGFLIGQYLL) traverse the membrane as a helical segment. At 200–229 (YGFEVSPVFVCSRKPCPHKIDCFISRPTEK) the chain is on the extracellular side. The chain crosses the membrane as a helical span at residues 230-252 (TIFLLIMYGVSCMCLLLNVWEML). Over 253–394 (HLGFGTIRDT…SGDGKNSVWI (142 aa)) the chain is Cytoplasmic. Residues 354-394 (IQAYNNQNNPGSSSREKKSKAGSNKSSASSKSGDGKNSVWI) are disordered. Polar residues predominate over residues 356 to 366 (AYNNQNNPGSS). The span at 374-394 (AGSNKSSASSKSGDGKNSVWI) shows a compositional bias: low complexity.

It belongs to the connexin family. Gamma-type subfamily. As to quaternary structure, a connexon is composed of a hexamer of connexins. As to expression, mostly in heart and stomach.

It localises to the cell membrane. The protein resides in the cell junction. It is found in the gap junction. In terms of biological role, one gap junction consists of a cluster of closely packed pairs of transmembrane channels, the connexons, through which materials of low MW diffuse from one cell to a neighboring cell. This is Gap junction gamma-1 protein (GJC1) from Gallus gallus (Chicken).